A 143-amino-acid polypeptide reads, in one-letter code: Transmembrane protein 207 (143 aa).

Positions 1 to 29 (MSTSSPFRVASKIVTAGCLCLPLFQRVLS) are cleaved as a signal peptide. A helical transmembrane segment spans residues 52–72 (IWFFLLIFLVVLLCGVVLFCL).

Interacts with WWOX.

It is found in the membrane. This is Transmembrane protein 207 from Mus musculus (Mouse).